Reading from the N-terminus, the 188-residue chain is Elongation factor P (188 aa).

The protein belongs to the elongation factor P family.

The protein localises to the cytoplasm. The protein operates within protein biosynthesis; polypeptide chain elongation. Functionally, involved in peptide bond synthesis. Stimulates efficient translation and peptide-bond synthesis on native or reconstituted 70S ribosomes in vitro. Probably functions indirectly by altering the affinity of the ribosome for aminoacyl-tRNA, thus increasing their reactivity as acceptors for peptidyl transferase. This Methylobacterium sp. (strain 4-46) protein is Elongation factor P.